Consider the following 566-residue polypeptide: CTP synthase (566 aa).

The tract at residues 1 to 265 is amidoligase domain; it reads MTKYVFVTGG…DEIVCHKLNL (265 aa). CTP is bound at residue S13. Residue S13 participates in UTP binding. Residues 14–19 and D71 contribute to the ATP site; that span reads SLGKGI. Mg(2+) contacts are provided by D71 and E139. Residues 146–148, 186–191, and K222 each bind CTP; these read DIE and KTKPTQ. Residues 186-191 and K222 contribute to the UTP site; that span reads KTKPTQ. The Glutamine amidotransferase type-1 domain maps to 290-543; that stretch reads EIALVGKYVD…IEAAAVFADK (254 aa). G351 provides a ligand contact to L-glutamine. Residue C378 is the Nucleophile; for glutamine hydrolysis of the active site. L-glutamine-binding positions include 379–382, E402, and R469; that span reads LGMQ. Residues H516 and E518 contribute to the active site. A disordered region spans residues 545–566; sequence PSSEGAISADKPERTTTGAYIQ.

It belongs to the CTP synthase family. In terms of assembly, homotetramer.

The enzyme catalyses UTP + L-glutamine + ATP + H2O = CTP + L-glutamate + ADP + phosphate + 2 H(+). The catalysed reaction is L-glutamine + H2O = L-glutamate + NH4(+). It carries out the reaction UTP + NH4(+) + ATP = CTP + ADP + phosphate + 2 H(+). It functions in the pathway pyrimidine metabolism; CTP biosynthesis via de novo pathway; CTP from UDP: step 2/2. With respect to regulation, allosterically activated by GTP, when glutamine is the substrate; GTP has no effect on the reaction when ammonia is the substrate. The allosteric effector GTP functions by stabilizing the protein conformation that binds the tetrahedral intermediate(s) formed during glutamine hydrolysis. Inhibited by the product CTP, via allosteric rather than competitive inhibition. Catalyzes the ATP-dependent amination of UTP to CTP with either L-glutamine or ammonia as the source of nitrogen. Regulates intracellular CTP levels through interactions with the four ribonucleotide triphosphates. The sequence is that of CTP synthase from Nitrosospira multiformis (strain ATCC 25196 / NCIMB 11849 / C 71).